The sequence spans 59 residues: U-myrmeciitoxin(01)-Mg5a (59 aa).

The N-terminal stretch at 1 to 21 is a signal peptide; it reads MRLSYLSLALAIIFVLTIMHA. Residues 22 to 38 constitute a propeptide that is removed on maturation; sequence SNVEAKASADPEPDAVG.

As to expression, expressed by the venom gland.

Its subcellular location is the secreted. Its function is as follows. May have antimicrobial properties, like most ant linear peptides. The sequence is that of U-myrmeciitoxin(01)-Mg5a from Myrmecia gulosa (Red bulldog ant).